The sequence spans 176 residues: uncharacterized protein (176 aa).

Positions 1–22 (MKYNNIIFLGLCLGLTTYSALS) are cleaved as a signal peptide. A disulfide bond links cysteine 38 and cysteine 78.

The protein belongs to the fimbrial protein family.

It is found in the fimbrium. This is an uncharacterized protein from Escherichia coli (strain K12).